Reading from the N-terminus, the 176-residue chain is Probable DNA-directed RNA polymerase subunit delta (176 aa).

The region spanning 14–81 is the HTH HARE-type domain; it reads KSFIDMAYTL…GENLWGLRDW (68 aa). Residues 114–176 form a disordered region; the sequence is LGEDEMDDDD…DFEDEEDFKA (63 aa). Composition is skewed to acidic residues over residues 116–145 and 153–176; these read EDEMDDDDDIPAQTDDQEELNDPEDEQVEE and VIEEDEDELDEDEEDFEDEEDFKA.

This sequence belongs to the RpoE family. As to quaternary structure, RNAP is composed of a core of 2 alpha, a beta and a beta' subunits. The core is associated with a delta subunit and one of several sigma factors.

Functionally, participates in both the initiation and recycling phases of transcription. In the presence of the delta subunit, RNAP displays an increased specificity of transcription, a decreased affinity for nucleic acids, and an increased efficiency of RNA synthesis because of enhanced recycling. This chain is Probable DNA-directed RNA polymerase subunit delta, found in Staphylococcus aureus (strain bovine RF122 / ET3-1).